A 436-amino-acid polypeptide reads, in one-letter code: UDP-N-acetylmuramate--L-alanine ligase (436 aa).

111–117 (GTHGKTS) is a binding site for ATP.

This sequence belongs to the MurCDEF family.

Its subcellular location is the cytoplasm. The catalysed reaction is UDP-N-acetyl-alpha-D-muramate + L-alanine + ATP = UDP-N-acetyl-alpha-D-muramoyl-L-alanine + ADP + phosphate + H(+). It participates in cell wall biogenesis; peptidoglycan biosynthesis. Its function is as follows. Cell wall formation. The protein is UDP-N-acetylmuramate--L-alanine ligase of Lactiplantibacillus plantarum (strain ATCC BAA-793 / NCIMB 8826 / WCFS1) (Lactobacillus plantarum).